The following is an 885-amino-acid chain: Alpha-actinin (885 aa).

The interval 1–242 is actin-binding; it reads MTQDGYMQQE…IMTYVSWYYH (242 aa). Calponin-homology (CH) domains follow at residues 26–130 and 139–245; these read KQQR…LRFA and MTAK…HAFH. Spectrin repeat units lie at residues 270-377, 389-494, 508-614, and 626-727; these read LMEE…EEWL, HLAQ…ALDE, EFAK…HTLQ, and LRRQ…NEVE. EF-hand domains lie at 741 to 776 and 780 to 815; these read EQLNEFRTSFNHFDKKRTGRLAPEEFKSCLVSLGYN and DDRPEFRRILAIVDPNKTGYVHFDAFLDFMTREYTD. Ca(2+) contacts are provided by Asp754, Thr758, Arg760, Glu765, Asp793, Asn795, Thr797, and Tyr799.

This sequence belongs to the alpha-actinin family. As to quaternary structure, homodimer; antiparallel.

Functionally, F-actin cross-linking protein which is thought to anchor actin to a variety of intracellular structures. This is a bundling protein. This is Alpha-actinin from Dermatophagoides farinae (American house dust mite).